The chain runs to 420 residues: Heterogeneous nuclear ribonucleoprotein D-like (420 aa).

Disordered stretches follow at residues Met1–Pro83 and Gln96–Met120. Arg25 bears the Omega-N-methylarginine mark. The span at Arg36–Gln52 shows a compositional bias: low complexity. 2 consecutive RRM domains span residues Gly148–Glu230 and Lys233–Glu312. The residue at position 161 (Lys161) is an N6-methyllysine. Lys209 participates in a covalent cross-link: Glycyl lysine isopeptide (Lys-Gly) (interchain with G-Cter in SUMO2). The residue at position 216 (Lys216) is an N6-acetyllysine. Ser241 is modified (phosphoserine). Disordered regions lie at residues Val313 to Gln348 and Gly398 to Tyr420. A compositionally biased stretch (gly residues) spans Gly323–Gln342. Residues Gln342–Tyr420 form a necessary for interaction with TNPO1 region. Residues Tyr396–Tyr420 are necessary for its nuclear import and export. Arg408 carries the post-translational modification Dimethylated arginine; alternate. At Arg408 the chain carries Omega-N-methylarginine; alternate.

In terms of assembly, interacts with ZNF148. Interacts with TNPO1. In terms of processing, dimethylation of Arg-408 is probably of the asymmetric type. Expressed in heart, brain, placenta, lung, liver, skeletal muscle, kidney, pancreas, spleen, thymus, prostate, testis, ovary, small intestine, colon and leukocytes. Expressed in myeloid leukemia, gastric adenocarcinoma, cervical carcinoma, hepatoma, fibrosarcoma, colon adenocarcinoma, epidermoid carcinoma, osteosarcoma and urinary bladder carcinoma cells.

Its subcellular location is the nucleus. The protein localises to the cytoplasm. In terms of biological role, acts as a transcriptional regulator. Promotes transcription repression. Promotes transcription activation in differentiated myotubes. Binds to double- and single-stranded DNA sequences. Binds to the transcription suppressor CATR sequence of the COX5B promoter. Binds with high affinity to RNA molecules that contain AU-rich elements (AREs) found within the 3'-UTR of many proto-oncogenes and cytokine mRNAs. Binds both to nuclear and cytoplasmic poly(A) mRNAs. Binds to poly(G) and poly(A), but not to poly(U) or poly(C) RNA homopolymers. Binds to the 5'-ACUAGC-3' RNA consensus sequence. The sequence is that of Heterogeneous nuclear ribonucleoprotein D-like (HNRNPDL) from Homo sapiens (Human).